Here is a 313-residue protein sequence, read N- to C-terminus: MKKKLIIGTRSSPLALWQADFTQAELSKHFPDLEIELKLVKTTGDVLLDSPLSKIGDMGLFTKDIEKHLISGEIDLAVHSLKDVPTETPEGLMLSAFTEREDTRDVIISKNGESLKTLKQDAKIATSSLRRTSQLLSMRPDFQMGDIRGNLNTRFKKFDESDFDAMMLAYAGVHRLNFGDRISEILPHEVMLPAVGQGALGIETRVDDEATKEIVSVMNNVNTEFCTKAERALLRHLQGGCQIPIGSYASLKNGNLHLLAYVGSVDGKRTIRNEITKENCTLPEQAEQAGIELAEELLKQGANEILAEIRKTC.

At cysteine 241 the chain carries S-(dipyrrolylmethanemethyl)cysteine.

This sequence belongs to the HMBS family. In terms of assembly, monomer. Requires dipyrromethane as cofactor.

It catalyses the reaction 4 porphobilinogen + H2O = hydroxymethylbilane + 4 NH4(+). Its pathway is porphyrin-containing compound metabolism; protoporphyrin-IX biosynthesis; coproporphyrinogen-III from 5-aminolevulinate: step 2/4. The protein operates within porphyrin-containing compound metabolism; chlorophyll biosynthesis. Functionally, tetrapolymerization of the monopyrrole PBG into the hydroxymethylbilane pre-uroporphyrinogen in several discrete steps. This chain is Porphobilinogen deaminase, found in Chlorobium phaeobacteroides (strain BS1).